Consider the following 373-residue polypeptide: Transmembrane protein adipocyte-associated 1 (373 aa).

Asparagine 11 and asparagine 23 each carry an N-linked (GlcNAc...) asparagine glycan. The next 7 helical transmembrane spans lie at 48–68 (LLLL…LPSA), 76–96 (SSPI…VGIA), 123–143 (FFLL…GHLE), 151–171 (VLAI…TLEI), 192–212 (QFWL…VILP), 234–254 (ILAL…FDII), and 265–285 (FLYF…GFFG). Asparagine 361 carries an N-linked (GlcNAc...) asparagine glycan.

The protein belongs to the UPF0359 family. As to expression, ubiquitous, with higher levels in heart, placenta and kidney.

Its subcellular location is the membrane. In Homo sapiens (Human), this protein is Transmembrane protein adipocyte-associated 1 (TPRA1).